A 675-amino-acid chain; its full sequence is Protein distal antenna (675 aa).

Residues 5-56 form the HTH psq-type domain; that stretch reads TKGKRPLRHLTATDKIDAIQRIHDGESKASVARDIGVPESTLRGWCKNEEKL. The H-T-H motif DNA-binding region spans 32–52; sequence KASVARDIGVPESTLRGWCKN. Disordered regions lie at residues 239-269, 337-393, 458-534, 546-596, and 655-675; these read QSLR…KNPS, LYSS…PEDT, LNII…SKCN, FQNP…AHKS, and ERQQ…RRRK. Over residues 339–368 the composition is skewed to low complexity; that stretch reads SSMPRPSSPQQSSSPPQQHQQVQHHPSTQT. Positions 369-384 are enriched in pro residues; sequence PTPPIVSTPQPTPPSS. The segment covering 469–478 has biased composition (basic and acidic residues); sequence VKSEPEDLSN. Over residues 479 to 493 the composition is skewed to low complexity; the sequence is HNHSSSNAAAVAAPA. A compositionally biased stretch (polar residues) spans 499-508; the sequence is FNPSPSTSAK. A compositionally biased stretch (acidic residues) spans 513-528; it reads QEDDEEQAGPADDESP. Residues 559-579 are compositionally biased toward low complexity; sequence NLSIRSNNSPRRRSVSPAVSN.

Homomers. Interacts with itself, danr, ey and dac to form a complex (or complexes) containing the RD factors.

It localises to the nucleus. Its function is as follows. Probable transcription factor with a role in the retinal determination (RD) network. Contributes to differentiation of antenna-specific characteristics. In Aedes aegypti (Yellowfever mosquito), this protein is Protein distal antenna.